A 226-amino-acid chain; its full sequence is Uridylate kinase (226 aa).

6–10 serves as a coordination point for ATP; the sequence is KISGK. Position 43 (Gly-43) interacts with UMP. The ATP site is built by Gly-44 and Arg-48. UMP is bound by residues Asp-65 and 113–119; that span reads FQPGQST. Residues Thr-139, Asn-140, Tyr-145, and Asp-148 each coordinate ATP.

This sequence belongs to the UMP kinase family. In terms of assembly, homohexamer.

It is found in the cytoplasm. It catalyses the reaction UMP + ATP = UDP + ADP. The protein operates within pyrimidine metabolism; CTP biosynthesis via de novo pathway; UDP from UMP (UMPK route): step 1/1. Its activity is regulated as follows. Inhibited by UTP. Its function is as follows. Catalyzes the reversible phosphorylation of UMP to UDP. This Saccharolobus islandicus (strain M.16.27) (Sulfolobus islandicus) protein is Uridylate kinase.